Consider the following 137-residue polypeptide: MIVIAFDFGLKNIGVAVGENILKKGRALNKLSAKNGSPDWNNIKNLLKIWQPKFLVVGLPLNIDGTRQDITKKAEKFAFLLKYKFNIFVYLHDERLSTKEAKSLIFKKNGFKVLKKEKIHSVAAVIILESWFNQNLY.

The protein belongs to the YqgF nuclease family.

It is found in the cytoplasm. Its function is as follows. Could be a nuclease involved in processing of the 5'-end of pre-16S rRNA. The sequence is that of Putative pre-16S rRNA nuclease from Buchnera aphidicola subsp. Schizaphis graminum (strain Sg).